A 333-amino-acid chain; its full sequence is Glycerol-3-phosphate dehydrogenase [NAD(P)+] (333 aa).

The NADPH site is built by Ser10, Trp11, His31, Arg32, and Lys105. Sn-glycerol 3-phosphate-binding residues include Lys105, Gly136, and Ser138. Ala140 contacts NADPH. The sn-glycerol 3-phosphate site is built by Lys191, Asp244, Ser254, Arg255, and Asn256. Lys191 acts as the Proton acceptor in catalysis. Arg255 contacts NADPH. Positions 279 and 281 each coordinate NADPH.

This sequence belongs to the NAD-dependent glycerol-3-phosphate dehydrogenase family.

It localises to the cytoplasm. The enzyme catalyses sn-glycerol 3-phosphate + NAD(+) = dihydroxyacetone phosphate + NADH + H(+). It catalyses the reaction sn-glycerol 3-phosphate + NADP(+) = dihydroxyacetone phosphate + NADPH + H(+). The protein operates within membrane lipid metabolism; glycerophospholipid metabolism. Functionally, catalyzes the reduction of the glycolytic intermediate dihydroxyacetone phosphate (DHAP) to sn-glycerol 3-phosphate (G3P), the key precursor for phospholipid synthesis. The polypeptide is Glycerol-3-phosphate dehydrogenase [NAD(P)+] (Chlorobium phaeobacteroides (strain DSM 266 / SMG 266 / 2430)).